A 146-amino-acid chain; its full sequence is Large ribosomal subunit protein bL21 (146 aa).

Over residues 95-104 the composition is skewed to basic residues; it reads PKKKTRRKMG. The disordered stretch occupies residues 95–146; sequence PKKKTRRKMGHRQELTRVMVKSISISKSTPKSSPKTEATKKSTSSKASKPEN. Residues 115 to 146 are compositionally biased toward low complexity; sequence KSISISKSTPKSSPKTEATKKSTSSKASKPEN.

Belongs to the bacterial ribosomal protein bL21 family. In terms of assembly, part of the 50S ribosomal subunit. Contacts protein L20.

This protein binds to 23S rRNA in the presence of protein L20. This is Large ribosomal subunit protein bL21 from Prochlorococcus marinus (strain MIT 9515).